The following is a 729-amino-acid chain: MHNGSNGSVEQRDSMPETSREWWPGSLDVEILDQNAQDVGPWNGDFDYAEAFQELDYEALKEDIEEVMTTSKDWWPADYGHYGPLFIRMSWHAAGTYRTTDGRGGSSGGRQRLAPLNSWPDNANLDKARRLLWPVKQKYGRKISWADLLVLAGNVAMESMGFETFGFAGGREDDFKPDESIDWGPEDEMETWGRFNEEDELDNPLGATVMGLIYVNPEGPESTPDPEWSAQRIRKSFGRMAMNDRETAALIAGGHTFGKVHGADTDEHLQAEPEAAPIEQQGLGWHNEHGSGKGGDTITSGIEGPWTDAPTEWDMGYLDFLLDYEWEVHKGPGGAWQWRPKSDELKGVVPDAHDASETVDPMMLTTDVALKRDPDYREIIEDFRENPDAFEDAFARAWFKLLHRDMGPKERYLGPEVPEEDLIWQDPVPDADHDLIGDEEIAELKEAILETDLSVSRLVKTAWASASTYRDSDKRGGANGARIRLEPHRNWEANEPPQLAHALEVLTGIQKNFNDARTDDVRVSLADLIVLGGSAAIEKAAADAGHDVEVPFTPGRTDATQEQTDVEAFEYLEPKADGFRNYIADDPWQDWTPEEFLVDKADLLNLTPAETTVLVGGMRALDATHEQADGYGVFTDRPETLNNDYFVNLLDMGHEWDPVSEDKQHFKIRDRDTGEVKWKATRVDLIFGSNSRFRALSQVYGSGDAEEKFVDDFVDAWTKVMNLDRFDLE.

The tract at residues 1 to 20 (MHNGSNGSVEQRDSMPETSR) is disordered. Positions 10 to 20 (EQRDSMPETSR) are enriched in basic and acidic residues. A cross-link (tryptophyl-tyrosyl-methioninium (Trp-Tyr) (with M-240)) is located at residues 91–214 (WHAAGTYRTT…LGATVMGLIY (124 aa)). The active-site Proton acceptor is the H92. The segment at residues 214 to 240 (YVNPEGPESTPDPEWSAQRIRKSFGRM) is a cross-link (tryptophyl-tyrosyl-methioninium (Tyr-Met) (with W-91)). H255 lines the heme b pocket.

Belongs to the peroxidase family. Peroxidase/catalase subfamily. As to quaternary structure, homodimer or homotetramer. The cofactor is heme b. Formation of the three residue Trp-Tyr-Met cross-link is important for the catalase, but not the peroxidase activity of the enzyme.

It carries out the reaction H2O2 + AH2 = A + 2 H2O. The enzyme catalyses 2 H2O2 = O2 + 2 H2O. Functionally, bifunctional enzyme with both catalase and broad-spectrum peroxidase activity. The sequence is that of Catalase-peroxidase from Salinibacter ruber (strain DSM 13855 / M31).